The primary structure comprises 303 residues: 3-methyl-2-oxobutanoate hydroxymethyltransferase (303 aa).

The span at 1 to 10 (MDSSGTVRNQ) shows a compositional bias: polar residues. Residues 1–41 (MDSSGTVRNQTSDDHSRPADAAGTAATLYGAPAETRSPRRS) form a disordered region. Residues D84 and D123 each contribute to the Mg(2+) site. Residues 84–85 (DS), D123, and K153 each bind 3-methyl-2-oxobutanoate. A Mg(2+)-binding site is contributed by E155. E221 acts as the Proton acceptor in catalysis.

This sequence belongs to the PanB family. Homodecamer; pentamer of dimers. Mg(2+) serves as cofactor.

It localises to the cytoplasm. It carries out the reaction 3-methyl-2-oxobutanoate + (6R)-5,10-methylene-5,6,7,8-tetrahydrofolate + H2O = 2-dehydropantoate + (6S)-5,6,7,8-tetrahydrofolate. It participates in cofactor biosynthesis; (R)-pantothenate biosynthesis; (R)-pantoate from 3-methyl-2-oxobutanoate: step 1/2. Its function is as follows. Catalyzes the reversible reaction in which hydroxymethyl group from 5,10-methylenetetrahydrofolate is transferred onto alpha-ketoisovalerate to form ketopantoate. This chain is 3-methyl-2-oxobutanoate hydroxymethyltransferase, found in Frankia alni (strain DSM 45986 / CECT 9034 / ACN14a).